Here is a 59-residue protein sequence, read N- to C-terminus: UPF0181 protein YoaH (59 aa).

It belongs to the UPF0181 family.

The sequence is that of UPF0181 protein YoaH from Shigella sonnei (strain Ss046).